A 410-amino-acid polypeptide reads, in one-letter code: Platelet-activating factor acetylhydrolase IB subunit alpha (410 aa).

The required for self-association and interaction with PAFAH1B2 and PAFAH1B3 stretch occupies residues M1 to D38. The interval M1–M66 is interaction with NDE1. Residues M1 to Y102 are interaction with NDEL1. A LisH domain is found at Q7–M39. An N6-acetyllysine modification is found at K53. Positions T56–G82 form a coiled coil. Residues G83–R410 are interaction with dynein and dynactin. WD repeat units lie at residues G106–K147, G148–T187, G190–T229, G232–E271, E274–T333, G336–N377, and A378–R410. At S109 the chain carries Phosphoserine. An interaction with DCX region spans residues Y367–C409. Residues F388–R410 are interaction with NDEL1.

The protein belongs to the WD repeat LIS1/nudF family. In terms of assembly, can self-associate. Component of the cytosolic PAF-AH (I) heterotetrameric enzyme, which is composed of PAFAH1B1 (beta), PAFAH1B2 (alpha2) and PAFAH1B3 (alpha1) subunits. The catalytic activity of the enzyme resides in the alpha1 (PAFAH1B3) and alpha2 (PAFAH1B2) subunits, whereas the beta subunit (PAFAH1B1) has regulatory activity. Trimer formation is not essential for the catalytic activity. Interacts with the catalytic dimer of PAF-AH (I) heterotetrameric enzyme: interacts with PAFAH1B2 homodimer (alpha2/alpha2 homodimer), PAFAH1B3 homodimer (alpha1/alpha1 homodimer) and PAFAH1B2-PAFAH1B3 heterodimer (alpha2/alpha1 heterodimer). Interacts with DCX, dynein, dynactin, IQGAP1, KATNB1, NDE1, NDEL1, NUDC and RSN. Interacts with DISC1, and this interaction is enhanced by NDEL1. Interacts with DAB1 when DAB1 is phosphorylated in response to RELN/reelin signaling. Interacts with INTS13. Interacts with DCDC1.

The protein localises to the cytoplasm. Its subcellular location is the cytoskeleton. The protein resides in the microtubule organizing center. It is found in the centrosome. It localises to the spindle. The protein localises to the nucleus membrane. Its function is as follows. Regulatory subunit (beta subunit) of the cytosolic type I platelet-activating factor (PAF) acetylhydrolase (PAF-AH (I)), an enzyme that catalyzes the hydrolyze of the acetyl group at the sn-2 position of PAF and its analogs and participates in PAF inactivation. Regulates the PAF-AH (I) activity in a catalytic dimer composition-dependent manner. Positively regulates the activity of the minus-end directed microtubule motor protein dynein. May enhance dynein-mediated microtubule sliding by targeting dynein to the microtubule plus end. Required for several dynein- and microtubule-dependent processes such as the maintenance of Golgi integrity, the peripheral transport of microtubule fragments and the coupling of the nucleus and centrosome. Required during brain development for the proliferation of neuronal precursors and the migration of newly formed neurons from the ventricular/subventricular zone toward the cortical plate. Neuronal migration involves a process called nucleokinesis, whereby migrating cells extend an anterior process into which the nucleus subsequently translocates. During nucleokinesis dynein at the nuclear surface may translocate the nucleus towards the centrosome by exerting force on centrosomal microtubules. Also required for proper activation of Rho GTPases and actin polymerization at the leading edge of locomoting cerebellar neurons and postmigratory hippocampal neurons in response to calcium influx triggered via NMDA receptors. May also play a role in other forms of cell locomotion including the migration of fibroblasts during wound healing. Required for dynein recruitment to microtubule plus ends and BICD2-bound cargos. May modulate the Reelin pathway through interaction of the PAF-AH (I) catalytic dimer with VLDLR. The chain is Platelet-activating factor acetylhydrolase IB subunit alpha from Sus scrofa (Pig).